The chain runs to 404 residues: S-adenosylmethionine synthase (404 aa).

Residue His-17 coordinates ATP. Asp-19 serves as a coordination point for Mg(2+). Glu-45 contacts K(+). 2 residues coordinate L-methionine: Glu-58 and Gln-101. A flexible loop region spans residues 101–111 (QSPDIAMGVDQ). ATP-binding positions include 177–179 (DGK), 244–245 (RF), Asp-253, 259–260 (RK), Ala-276, and Lys-280. Asp-253 lines the L-methionine pocket. Position 284 (Lys-284) interacts with L-methionine.

Belongs to the AdoMet synthase family. Homotetramer; dimer of dimers. It depends on Mg(2+) as a cofactor. Requires K(+) as cofactor.

It localises to the cytoplasm. It catalyses the reaction L-methionine + ATP + H2O = S-adenosyl-L-methionine + phosphate + diphosphate. The protein operates within amino-acid biosynthesis; S-adenosyl-L-methionine biosynthesis; S-adenosyl-L-methionine from L-methionine: step 1/1. In terms of biological role, catalyzes the formation of S-adenosylmethionine (AdoMet) from methionine and ATP. The overall synthetic reaction is composed of two sequential steps, AdoMet formation and the subsequent tripolyphosphate hydrolysis which occurs prior to release of AdoMet from the enzyme. In Geobacillus thermodenitrificans (strain NG80-2), this protein is S-adenosylmethionine synthase.